The sequence spans 445 residues: Asparagine--tRNA ligase (445 aa).

Belongs to the class-II aminoacyl-tRNA synthetase family. Homodimer.

It localises to the cytoplasm. The catalysed reaction is tRNA(Asn) + L-asparagine + ATP = L-asparaginyl-tRNA(Asn) + AMP + diphosphate + H(+). In Deinococcus deserti (strain DSM 17065 / CIP 109153 / LMG 22923 / VCD115), this protein is Asparagine--tRNA ligase.